We begin with the raw amino-acid sequence, 133 residues long: UPF0134 protein MPN_151 (133 aa).

Belongs to the UPF0134 family.

The protein is UPF0134 protein MPN_151 of Mycoplasma pneumoniae (strain ATCC 29342 / M129 / Subtype 1) (Mycoplasmoides pneumoniae).